The following is a 102-amino-acid chain: Nuclear protein 2 (102 aa).

Disordered regions lie at residues 1 to 26 (MDPPTRPSVSGPRTRARPPPPEALPT) and 46 to 102 (PASG…TRLA). Residues 85 to 102 (QRKRRQRQLQPRPRTRLA) show a composition bias toward basic residues.

This sequence belongs to the NUPR family.

Its subcellular location is the nucleus. In terms of biological role, acts as a transcriptional repressor by inhibiting gene expression at the NUPR1 promoter in a p53/TP53-dependent manner in cancer cells. Involved in the G1 cell cycle arrest, and in a decrease in cell viability and cell proliferation of pancreatic cancer cells. Plays a role as a negative regulator of the protumoral factor NUPR1. The polypeptide is Nuclear protein 2 (Mus musculus (Mouse)).